Consider the following 432-residue polypeptide: Pachytene checkpoint protein 2 homolog (432 aa).

The residue at position 1 (Met-1) is an N-acetylmethionine. 179–186 (GPPGTGKT) serves as a coordination point for ATP.

This sequence belongs to the AAA ATPase family. PCH2 subfamily. In terms of assembly, specifically interacts with the ligand binding domain of the thyroid receptor (TR). This interaction does not require the presence of thyroid hormone for its interaction. Interacts with HPV16 E1. Interacts with proteasome subunit PSMA8; to participate in meiosis progression during spermatogenesis.

Plays a key role in chromosome recombination and chromosome structure development during meiosis. Required at early steps in meiotic recombination that leads to non-crossovers pathways. Also needed for efficient completion of homologous synapsis by influencing crossover distribution along the chromosomes affecting both crossovers and non-crossovers pathways. Also required for development of higher-order chromosome structures and is needed for synaptonemal-complex formation. In males, required for efficient synapsis of the sex chromosomes and for sex body formation. Promotes early steps of the DNA double-strand breaks (DSBs) repair process upstream of the assembly of RAD51 complexes. Required for depletion of HORMAD1 and HORMAD2 from synapsed chromosomes. Plays a role in mitotic spindle assembly checkpoint (SAC) activation. This chain is Pachytene checkpoint protein 2 homolog (TRIP13), found in Homo sapiens (Human).